Reading from the N-terminus, the 108-residue chain is Tetrahydromethanopterin S-methyltransferase subunit B (108 aa).

Residues Phe-81–Leu-101 traverse the membrane as a helical segment.

This sequence belongs to the MtrB family. As to quaternary structure, the complex is composed of 8 subunits; MtrA, MtrB, MtrC, MtrD, MtrE, MtrF, MtrG and MtrH.

The protein localises to the cell membrane. It catalyses the reaction 5-methyl-5,6,7,8-tetrahydromethanopterin + coenzyme M + 2 Na(+)(in) = 5,6,7,8-tetrahydromethanopterin + methyl-coenzyme M + 2 Na(+)(out). The protein operates within one-carbon metabolism; methanogenesis from CO(2); methyl-coenzyme M from 5,10-methylene-5,6,7,8-tetrahydromethanopterin: step 2/2. Its function is as follows. Part of a complex that catalyzes the formation of methyl-coenzyme M and tetrahydromethanopterin from coenzyme M and methyl-tetrahydromethanopterin. This is an energy-conserving, sodium-ion translocating step. In Methanococcus aeolicus (strain ATCC BAA-1280 / DSM 17508 / OCM 812 / Nankai-3), this protein is Tetrahydromethanopterin S-methyltransferase subunit B.